The sequence spans 285 residues: 2,3,4,5-tetrahydropyridine-2,6-dicarboxylate N-succinyltransferase (285 aa).

The substrate site is built by arginine 111 and aspartate 148.

The protein belongs to the transferase hexapeptide repeat family. In terms of assembly, homotrimer.

It is found in the cytoplasm. It carries out the reaction (S)-2,3,4,5-tetrahydrodipicolinate + succinyl-CoA + H2O = (S)-2-succinylamino-6-oxoheptanedioate + CoA. Its pathway is amino-acid biosynthesis; L-lysine biosynthesis via DAP pathway; LL-2,6-diaminopimelate from (S)-tetrahydrodipicolinate (succinylase route): step 1/3. The polypeptide is 2,3,4,5-tetrahydropyridine-2,6-dicarboxylate N-succinyltransferase (Rhizobium rhizogenes (strain K84 / ATCC BAA-868) (Agrobacterium radiobacter)).